Here is a 222-residue protein sequence, read N- to C-terminus: Riboflavin kinase (222 aa).

Residues 1 to 92 (MVLAEDLECL…CRLFAHEGGH (92 aa)) form an H-T-H motif-like region. The tract at residues 93 to 222 (YTLPGIVISG…DRVNVEVAYD (130 aa)) is riboflavin kinase. 102–107 (GLGEGR) is a CDP binding site. The Mg(2+) site is built by Thr-131 and Asn-133. Residues Ser-188 and Glu-196 each coordinate FMN. 201 to 204 (VGLR) provides a ligand contact to CDP.

Belongs to the archaeal riboflavin kinase family. Requires Mg(2+) as cofactor.

It catalyses the reaction riboflavin + CTP = CDP + FMN + H(+). It functions in the pathway cofactor biosynthesis; FMN biosynthesis; FMN from riboflavin (CTP route): step 1/1. In terms of biological role, catalyzes the CTP-dependent phosphorylation of riboflavin (vitamin B2) to form flavin mononucleotide (FMN). The chain is Riboflavin kinase (ribK) from Methanoregula boonei (strain DSM 21154 / JCM 14090 / 6A8).